A 689-amino-acid chain; its full sequence is Glycine--tRNA ligase beta subunit (689 aa).

Belongs to the class-II aminoacyl-tRNA synthetase family. Tetramer of two alpha and two beta subunits.

Its subcellular location is the cytoplasm. It catalyses the reaction tRNA(Gly) + glycine + ATP = glycyl-tRNA(Gly) + AMP + diphosphate. The protein is Glycine--tRNA ligase beta subunit of Salmonella dublin (strain CT_02021853).